We begin with the raw amino-acid sequence, 383 residues long: D-alanine--D-alanine ligase (383 aa).

Residues 164–373 (KLAFQAAGLE…YSALIDELIT (210 aa)) form the ATP-grasp domain. 196 to 251 (VAELGFPVFVKPARAGSSFGITRVDEPSQLDAAIATAREHDLKLVVEAGIDGREIE) provides a ligand contact to ATP. Mg(2+)-binding residues include Asp-327, Glu-340, and Asn-342.

This sequence belongs to the D-alanine--D-alanine ligase family. It depends on Mg(2+) as a cofactor. Mn(2+) serves as cofactor.

It localises to the cytoplasm. The enzyme catalyses 2 D-alanine + ATP = D-alanyl-D-alanine + ADP + phosphate + H(+). Its pathway is cell wall biogenesis; peptidoglycan biosynthesis. In terms of biological role, cell wall formation. The sequence is that of D-alanine--D-alanine ligase from Kocuria rhizophila (strain ATCC 9341 / DSM 348 / NBRC 103217 / DC2201).